Reading from the N-terminus, the 209-residue chain is Elongation factor Ts, chloroplastic (209 aa).

This sequence belongs to the EF-Ts family.

It is found in the plastid. It localises to the chloroplast. Its function is as follows. Associates with the EF-Tu.GDP complex and induces the exchange of GDP to GTP. It remains bound to the aminoacyl-tRNA.EF-Tu.GTP complex up to the GTP hydrolysis stage on the ribosome. This chain is Elongation factor Ts, chloroplastic (tsf), found in Cyanidioschyzon merolae (strain NIES-3377 / 10D) (Unicellular red alga).